A 128-amino-acid polypeptide reads, in one-letter code: Large ribosomal subunit protein bL20c (128 aa).

Belongs to the bacterial ribosomal protein bL20 family. As to quaternary structure, component of the chloroplast large ribosomal subunit (LSU). Mature 70S chloroplast ribosomes of higher plants consist of a small (30S) and a large (50S) subunit. The 30S small subunit contains 1 molecule of ribosomal RNA (16S rRNA) and 24 different proteins. The 50S large subunit contains 3 rRNA molecules (23S, 5S and 4.5S rRNA) and 33 different proteins.

It localises to the plastid. Its subcellular location is the chloroplast. Functionally, component of the chloroplast ribosome (chloro-ribosome), a dedicated translation machinery responsible for the synthesis of chloroplast genome-encoded proteins, including proteins of the transcription and translation machinery and components of the photosynthetic apparatus. The protein is Large ribosomal subunit protein bL20c (rpl20) of Spinacia oleracea (Spinach).